A 120-amino-acid chain; its full sequence is MKRTRTESVQRRHSRIRRKVEGTPSRPRLAVFRSNNHIYAQVIDDVAQHTLVAASTLDKDLKGEFSSGATCEASEAVGKLVAQRALAKGIEKVVFDRGGNLYHGRIRALAQAAREAGLDF.

The segment covering Met1–Gln10 has biased composition (basic and acidic residues). The disordered stretch occupies residues Met1 to Pro24.

It belongs to the universal ribosomal protein uL18 family. In terms of assembly, part of the 50S ribosomal subunit; part of the 5S rRNA/L5/L18/L25 subcomplex. Contacts the 5S and 23S rRNAs.

In terms of biological role, this is one of the proteins that bind and probably mediate the attachment of the 5S RNA into the large ribosomal subunit, where it forms part of the central protuberance. This Gloeothece citriformis (strain PCC 7424) (Cyanothece sp. (strain PCC 7424)) protein is Large ribosomal subunit protein uL18.